We begin with the raw amino-acid sequence, 39 residues long: Cytochrome b559 subunit beta (39 aa).

A helical transmembrane segment spans residues 14–30; sequence WLTVHGLAVPTVSFLGS. Histidine 18 serves as a coordination point for heme.

Belongs to the PsbE/PsbF family. Heterodimer of an alpha subunit and a beta subunit. PSII is composed of 1 copy each of membrane proteins PsbA, PsbB, PsbC, PsbD, PsbE, PsbF, PsbH, PsbI, PsbJ, PsbK, PsbL, PsbM, PsbT, PsbX, PsbY, PsbZ, Psb30/Ycf12, at least 3 peripheral proteins of the oxygen-evolving complex and a large number of cofactors. It forms dimeric complexes. Requires heme b as cofactor.

The protein localises to the plastid. The protein resides in the chloroplast thylakoid membrane. Functionally, this b-type cytochrome is tightly associated with the reaction center of photosystem II (PSII). PSII is a light-driven water:plastoquinone oxidoreductase that uses light energy to abstract electrons from H(2)O, generating O(2) and a proton gradient subsequently used for ATP formation. It consists of a core antenna complex that captures photons, and an electron transfer chain that converts photonic excitation into a charge separation. In Lactuca sativa (Garden lettuce), this protein is Cytochrome b559 subunit beta.